We begin with the raw amino-acid sequence, 125 residues long: Small ribosomal subunit protein uS12 (125 aa).

A 3-methylthioaspartic acid modification is found at Asp89.

The protein belongs to the universal ribosomal protein uS12 family. As to quaternary structure, part of the 30S ribosomal subunit. Contacts proteins S8 and S17. May interact with IF1 in the 30S initiation complex.

Its function is as follows. With S4 and S5 plays an important role in translational accuracy. Interacts with and stabilizes bases of the 16S rRNA that are involved in tRNA selection in the A site and with the mRNA backbone. Located at the interface of the 30S and 50S subunits, it traverses the body of the 30S subunit contacting proteins on the other side and probably holding the rRNA structure together. The combined cluster of proteins S8, S12 and S17 appears to hold together the shoulder and platform of the 30S subunit. This Clostridium botulinum (strain ATCC 19397 / Type A) protein is Small ribosomal subunit protein uS12.